Here is a 185-residue protein sequence, read N- to C-terminus: Segregation and condensation protein B (185 aa).

It belongs to the ScpB family. In terms of assembly, homodimer. Homodimerization may be required to stabilize the binding of ScpA to the Smc head domains. Component of a cohesin-like complex composed of ScpA, ScpB and the Smc homodimer, in which ScpA and ScpB bind to the head domain of Smc. The presence of the three proteins is required for the association of the complex with DNA.

The protein resides in the cytoplasm. Participates in chromosomal partition during cell division. May act via the formation of a condensin-like complex containing Smc and ScpA that pull DNA away from mid-cell into both cell halves. This chain is Segregation and condensation protein B, found in Carboxydothermus hydrogenoformans (strain ATCC BAA-161 / DSM 6008 / Z-2901).